An 855-amino-acid chain; its full sequence is Coiled-coil domain-containing protein 87 (855 aa).

2 disordered regions span residues 23-43 (LFPS…QDAT) and 278-302 (SRPS…PTSP). The span at 287–296 (PSHSPSSESH) shows a compositional bias: low complexity. 2 coiled-coil regions span residues 387-413 (TRRL…EASG) and 764-789 (RSYL…ESVF).

The protein belongs to the CCDC87 family. In terms of tissue distribution, specifically expressed in testis (at protein level). Not detected in other tissues tested (at protein level). In the testis, localizes to pachytene spermatocytes and spermatids.

Plays a role in spermatogenesis, where it is important for normal sperm head morphology. Also required for the acrosome reaction and thus normal male fertility. The sequence is that of Coiled-coil domain-containing protein 87 (Ccdc87) from Mus musculus (Mouse).